A 467-amino-acid chain; its full sequence is ATP synthase subunit beta (467 aa).

Residue glycine 156–threonine 163 participates in ATP binding.

Belongs to the ATPase alpha/beta chains family. F-type ATPases have 2 components, CF(1) - the catalytic core - and CF(0) - the membrane proton channel. CF(1) has five subunits: alpha(3), beta(3), gamma(1), delta(1), epsilon(1). CF(0) has three main subunits: a(1), b(2) and c(9-12). The alpha and beta chains form an alternating ring which encloses part of the gamma chain. CF(1) is attached to CF(0) by a central stalk formed by the gamma and epsilon chains, while a peripheral stalk is formed by the delta and b chains.

It localises to the cell inner membrane. The catalysed reaction is ATP + H2O + 4 H(+)(in) = ADP + phosphate + 5 H(+)(out). Functionally, produces ATP from ADP in the presence of a proton gradient across the membrane. The catalytic sites are hosted primarily by the beta subunits. This Ralstonia nicotianae (strain ATCC BAA-1114 / GMI1000) (Ralstonia solanacearum) protein is ATP synthase subunit beta.